The chain runs to 361 residues: tRNA 2-selenouridine synthase (361 aa).

Residues 11-134 form the Rhodanese domain; that stretch reads ALLERPLIDV…MRQCVNAEIE (124 aa). The active-site S-selanylcysteine intermediate is C94.

Belongs to the SelU family. In terms of assembly, monomer.

It catalyses the reaction 5-methylaminomethyl-2-thiouridine(34) in tRNA + selenophosphate + (2E)-geranyl diphosphate + H2O + H(+) = 5-methylaminomethyl-2-selenouridine(34) in tRNA + (2E)-thiogeraniol + phosphate + diphosphate. It carries out the reaction 5-methylaminomethyl-2-thiouridine(34) in tRNA + (2E)-geranyl diphosphate = 5-methylaminomethyl-S-(2E)-geranyl-thiouridine(34) in tRNA + diphosphate. The enzyme catalyses 5-methylaminomethyl-S-(2E)-geranyl-thiouridine(34) in tRNA + selenophosphate + H(+) = 5-methylaminomethyl-2-(Se-phospho)selenouridine(34) in tRNA + (2E)-thiogeraniol. The catalysed reaction is 5-methylaminomethyl-2-(Se-phospho)selenouridine(34) in tRNA + H2O = 5-methylaminomethyl-2-selenouridine(34) in tRNA + phosphate. Its function is as follows. Involved in the post-transcriptional modification of the uridine at the wobble position (U34) of tRNA(Lys), tRNA(Glu) and tRNA(Gln). Catalyzes the conversion of 2-thiouridine (S2U-RNA) to 2-selenouridine (Se2U-RNA). Acts in a two-step process involving geranylation of 2-thiouridine (S2U) to S-geranyl-2-thiouridine (geS2U) and subsequent selenation of the latter derivative to 2-selenouridine (Se2U) in the tRNA chain. This Chromohalobacter salexigens (strain ATCC BAA-138 / DSM 3043 / CIP 106854 / NCIMB 13768 / 1H11) protein is tRNA 2-selenouridine synthase.